The chain runs to 367 residues: Peptide chain release factor 2 (367 aa).

Glutamine 254 bears the N5-methylglutamine mark.

This sequence belongs to the prokaryotic/mitochondrial release factor family. Post-translationally, methylated by PrmC. Methylation increases the termination efficiency of RF2.

The protein resides in the cytoplasm. Its function is as follows. Peptide chain release factor 2 directs the termination of translation in response to the peptide chain termination codons UGA and UAA. The chain is Peptide chain release factor 2 from Aromatoleum aromaticum (strain DSM 19018 / LMG 30748 / EbN1) (Azoarcus sp. (strain EbN1)).